We begin with the raw amino-acid sequence, 740 residues long: NAD(P)H-quinone oxidoreductase subunit 5, chloroplastic (740 aa).

16 helical membrane passes run W9 to F29, W40 to I60, I89 to I109, F125 to I145, I147 to T167, G185 to F205, N219 to A239, T258 to A278, V286 to A306, L327 to I347, A354 to S374, I396 to S416, W425 to Y445, L543 to F563, V602 to I622, and S717 to F737.

This sequence belongs to the complex I subunit 5 family. As to quaternary structure, NDH is composed of at least 16 different subunits, 5 of which are encoded in the nucleus.

It localises to the plastid. The protein resides in the chloroplast thylakoid membrane. The catalysed reaction is a plastoquinone + NADH + (n+1) H(+)(in) = a plastoquinol + NAD(+) + n H(+)(out). It catalyses the reaction a plastoquinone + NADPH + (n+1) H(+)(in) = a plastoquinol + NADP(+) + n H(+)(out). Its function is as follows. NDH shuttles electrons from NAD(P)H:plastoquinone, via FMN and iron-sulfur (Fe-S) centers, to quinones in the photosynthetic chain and possibly in a chloroplast respiratory chain. The immediate electron acceptor for the enzyme in this species is believed to be plastoquinone. Couples the redox reaction to proton translocation, and thus conserves the redox energy in a proton gradient. The chain is NAD(P)H-quinone oxidoreductase subunit 5, chloroplastic (ndhF) from Nicotiana tabacum (Common tobacco).